A 460-amino-acid chain; its full sequence is Argininosuccinate lyase (460 aa).

This sequence belongs to the lyase 1 family. Argininosuccinate lyase subfamily.

Its subcellular location is the cytoplasm. It carries out the reaction 2-(N(omega)-L-arginino)succinate = fumarate + L-arginine. It participates in amino-acid biosynthesis; L-arginine biosynthesis; L-arginine from L-ornithine and carbamoyl phosphate: step 3/3. This chain is Argininosuccinate lyase, found in Staphylococcus haemolyticus (strain JCSC1435).